The following is a 482-amino-acid chain: MKFIIKLFPEITIKSQSVRLRFIKILTGNIRNVLKHYDETLAVVRHWDNIEVRAKDENQRLAIRDALTRIPGIHHILEVEDVPFTDMHDIFEKALAQYREQLEGKTFCVRVKRRGKHEFSSIEVERYVGGGLNQHIESARVKLTNPDVTVHLEVEDDRLLLIKGRYEGIGGFPIGTQEDVLSLISGGFDSGVSSYMLMRRGCRVHYCFFNLGGAAHEIGVRQVAHYLWNRFGSSHRVRFVAINFEPVVGEILEKVDDGQMGVVLKRMMVRAASKVAERYGVQALVTGEALGQVSSQTLTNLRLIDNVSDTLILRPLISYDKEHIINLARQIGTEDFARTMPEYCGVISKSPTVKAIKAKIEAEEENFDFSILDKVVEEANNVDIREIAQQTQQEVVEVETVSGFGPNDVILDIRSVDEQDDKPLKVEGVDVVSLPFYKLSTKFGDLDQSKTWLLWCERGVMSRLQALYLREQGFENVKAYRP.

In terms of domain architecture, THUMP spans 61–165; sequence LAIRDALTRI…DDRLLLIKGR (105 aa). Residues 183–184, Lys265, Gly287, and Gln296 contribute to the ATP site; that span reads LI. A disulfide bond links Cys344 and Cys456. Positions 404–482 constitute a Rhodanese domain; the sequence is FGPNDVILDI…GFENVKAYRP (79 aa). Cys456 functions as the Cysteine persulfide intermediate in the catalytic mechanism.

This sequence belongs to the ThiI family.

Its subcellular location is the cytoplasm. The enzyme catalyses [ThiI sulfur-carrier protein]-S-sulfanyl-L-cysteine + a uridine in tRNA + 2 reduced [2Fe-2S]-[ferredoxin] + ATP + H(+) = [ThiI sulfur-carrier protein]-L-cysteine + a 4-thiouridine in tRNA + 2 oxidized [2Fe-2S]-[ferredoxin] + AMP + diphosphate. It catalyses the reaction [ThiS sulfur-carrier protein]-C-terminal Gly-Gly-AMP + S-sulfanyl-L-cysteinyl-[cysteine desulfurase] + AH2 = [ThiS sulfur-carrier protein]-C-terminal-Gly-aminoethanethioate + L-cysteinyl-[cysteine desulfurase] + A + AMP + 2 H(+). The protein operates within cofactor biosynthesis; thiamine diphosphate biosynthesis. Functionally, catalyzes the ATP-dependent transfer of a sulfur to tRNA to produce 4-thiouridine in position 8 of tRNAs, which functions as a near-UV photosensor. Also catalyzes the transfer of sulfur to the sulfur carrier protein ThiS, forming ThiS-thiocarboxylate. This is a step in the synthesis of thiazole, in the thiamine biosynthesis pathway. The sulfur is donated as persulfide by IscS. This chain is tRNA sulfurtransferase, found in Salmonella gallinarum (strain 287/91 / NCTC 13346).